We begin with the raw amino-acid sequence, 237 residues long: Small ribosomal subunit protein uS3 (237 aa).

The KH type-2 domain occupies 17-86; sequence VERHLGHELK…SPQIEVQQVD (70 aa).

This sequence belongs to the universal ribosomal protein uS3 family. In terms of assembly, part of the 30S ribosomal subunit.

Functionally, binds the lower part of the 30S subunit head. The polypeptide is Small ribosomal subunit protein uS3 (Methanospirillum hungatei JF-1 (strain ATCC 27890 / DSM 864 / NBRC 100397 / JF-1)).